We begin with the raw amino-acid sequence, 865 residues long: 3-O-alpha-D-mannopyranosyl-alpha-D-mannopyranose xylosylphosphotransferase (865 aa).

Polar residues predominate over residues 1–10 (MLSTALSPSS). Positions 1–66 (MLSTALSPSS…CRPSRSPRSR (66 aa)) are disordered. Residues 1–84 (MLSTALSPSS…HIRPHLTPRT (84 aa)) lie on the Cytoplasmic side of the membrane. Low complexity-rich tracts occupy residues 17–26 (SYSSSLSPTS) and 40–60 (SPSP…CRPS). Residues 85–105 (LTMLFLWMLSVWSIHHFFLPI) form a helical membrane-spanning segment. At 106-865 (SSLSRLSNPR…WDPVKDRYID (760 aa)) the chain is on the lumenal side. N-linked (GlcNAc...) asparagine glycans are attached at residues Asn201 and Asn302. The disordered stretch occupies residues 283–304 (KSKGRRHPRDLPGTPPSFSNLT).

It belongs to the XPT1 family. Mn(2+) serves as cofactor.

Its subcellular location is the golgi apparatus membrane. It carries out the reaction 3-alpha-D-mannopyranosyl-alpha-D-mannopyranose + UDP-alpha-D-xylose = 3-O-(6-O-alpha-D-xylosylphospho-alpha-D-mannopyranosyl)-alpha-D-mannopyranose + UMP + H(+). In terms of biological role, xylosylphosphotransferase that is specific for UDP-xylose as a donor and mannose as an acceptor to form a xylose-alpha-1-phosphate-6-mannose linkage. Functions in the O-glycosylation of proteins en route through the secretory pathway. The protein is 3-O-alpha-D-mannopyranosyl-alpha-D-mannopyranose xylosylphosphotransferase (XPT1) of Cryptococcus gattii serotype B (strain WM276 / ATCC MYA-4071) (Filobasidiella gattii).